A 307-amino-acid chain; its full sequence is Methionyl-tRNA formyltransferase (307 aa).

108-111 serves as a coordination point for (6S)-5,6,7,8-tetrahydrofolate; sequence SLLP.

This sequence belongs to the Fmt family.

The catalysed reaction is L-methionyl-tRNA(fMet) + (6R)-10-formyltetrahydrofolate = N-formyl-L-methionyl-tRNA(fMet) + (6S)-5,6,7,8-tetrahydrofolate + H(+). In terms of biological role, attaches a formyl group to the free amino group of methionyl-tRNA(fMet). The formyl group appears to play a dual role in the initiator identity of N-formylmethionyl-tRNA by promoting its recognition by IF2 and preventing the misappropriation of this tRNA by the elongation apparatus. This is Methionyl-tRNA formyltransferase from Xylella fastidiosa (strain M23).